Here is a 291-residue protein sequence, read N- to C-terminus: Methionine aminopeptidase (291 aa).

H118 is a binding site for substrate. Residues D135, D146, and H209 each contribute to the a divalent metal cation site. Residue H216 coordinates substrate. A divalent metal cation contacts are provided by E241 and E273.

It belongs to the peptidase M24A family. Methionine aminopeptidase type 1 subfamily. In terms of assembly, monomer. Requires Co(2+) as cofactor. Zn(2+) serves as cofactor. Mn(2+) is required as a cofactor. The cofactor is Fe(2+).

It carries out the reaction Release of N-terminal amino acids, preferentially methionine, from peptides and arylamides.. Its function is as follows. Removes the N-terminal methionine from nascent proteins. The N-terminal methionine is often cleaved when the second residue in the primary sequence is small and uncharged (Met-Ala-, Cys, Gly, Pro, Ser, Thr, or Val). Requires deformylation of the N(alpha)-formylated initiator methionine before it can be hydrolyzed. This is Methionine aminopeptidase from Chlamydia muridarum (strain MoPn / Nigg).